Here is a 320-residue protein sequence, read N- to C-terminus: Ferrochelatase (320 aa).

His-194 and Glu-275 together coordinate Fe cation.

Belongs to the ferrochelatase family. Monomer.

It is found in the cytoplasm. It catalyses the reaction heme b + 2 H(+) = protoporphyrin IX + Fe(2+). It participates in porphyrin-containing compound metabolism; protoheme biosynthesis; protoheme from protoporphyrin-IX: step 1/1. Catalyzes the ferrous insertion into protoporphyrin IX. The protein is Ferrochelatase of Salmonella typhi.